Reading from the N-terminus, the 154-residue chain is MDVTDISTITPLELISLEEPPATKEGAIEFLLDLAVDAGRVDDRDAALDALLEREGEATTGVGFGIGIPHAKTDAVSKPTVAFARSAEGIDFDAMDDKPAKLLFMILVPAAGGEDHLQILSALSRSLMHEDVREKLLEAESKQTVQDVLAEVVE.

Residues 8 to 152 (TITPLELISL…QTVQDVLAEV (145 aa)) enclose the PTS EIIA type-2 domain. Residue H70 is the Tele-phosphohistidine intermediate of the active site. At H70 the chain carries Phosphohistidine; by HPr.

The protein localises to the cytoplasm. In terms of biological role, the phosphoenolpyruvate-dependent sugar phosphotransferase system (sugar PTS), a major carbohydrate active transport system, catalyzes the phosphorylation of incoming sugar substrates concomitantly with their translocation across the cell membrane. The enzyme II PtfABC PTS system is involved in fructose transport. This chain is PTS system fructose-specific EIIA component, found in Haloferax volcanii (strain ATCC 29605 / DSM 3757 / JCM 8879 / NBRC 14742 / NCIMB 2012 / VKM B-1768 / DS2) (Halobacterium volcanii).